The sequence spans 396 residues: S-adenosylmethionine synthase (396 aa).

H15 is an ATP binding site. D17 is a binding site for Mg(2+). A K(+)-binding site is contributed by E43. L-methionine contacts are provided by E56 and Q99. A flexible loop region spans residues 99 to 109 (QSSDIAQGVDR). Residues 175–177 (DGK), 241–242 (RF), D250, 256–257 (RK), S273, and K277 contribute to the ATP site. Residue D250 coordinates L-methionine. K281 contributes to the L-methionine binding site.

It belongs to the AdoMet synthase family. Homotetramer; dimer of dimers. It depends on Mg(2+) as a cofactor. The cofactor is K(+).

The protein localises to the cytoplasm. The enzyme catalyses L-methionine + ATP + H2O = S-adenosyl-L-methionine + phosphate + diphosphate. It participates in amino-acid biosynthesis; S-adenosyl-L-methionine biosynthesis; S-adenosyl-L-methionine from L-methionine: step 1/1. Its function is as follows. Catalyzes the formation of S-adenosylmethionine (AdoMet) from methionine and ATP. The overall synthetic reaction is composed of two sequential steps, AdoMet formation and the subsequent tripolyphosphate hydrolysis which occurs prior to release of AdoMet from the enzyme. This is S-adenosylmethionine synthase from Pelotomaculum thermopropionicum (strain DSM 13744 / JCM 10971 / SI).